The primary structure comprises 157 residues: MSKKQGKPEYVTAISNRKARFEYEILDTIEAGIELLGSEVKSVRLGKASLSESYAMIHHGQVWLENMQITPYEHNTLDTLEPKRSRRLLLHKAEIMRLQSKISEKGLTLIPLKAYFNKRGVLKIELGLARGKKLYDKRETIKNRDAKRQLQQLRKQY.

It belongs to the SmpB family.

Its subcellular location is the cytoplasm. Required for rescue of stalled ribosomes mediated by trans-translation. Binds to transfer-messenger RNA (tmRNA), required for stable association of tmRNA with ribosomes. tmRNA and SmpB together mimic tRNA shape, replacing the anticodon stem-loop with SmpB. tmRNA is encoded by the ssrA gene; the 2 termini fold to resemble tRNA(Ala) and it encodes a 'tag peptide', a short internal open reading frame. During trans-translation Ala-aminoacylated tmRNA acts like a tRNA, entering the A-site of stalled ribosomes, displacing the stalled mRNA. The ribosome then switches to translate the ORF on the tmRNA; the nascent peptide is terminated with the 'tag peptide' encoded by the tmRNA and targeted for degradation. The ribosome is freed to recommence translation, which seems to be the essential function of trans-translation. The protein is SsrA-binding protein of Chlorobaculum tepidum (strain ATCC 49652 / DSM 12025 / NBRC 103806 / TLS) (Chlorobium tepidum).